A 207-amino-acid chain; its full sequence is Probable nicotinate-nucleotide adenylyltransferase (207 aa).

This sequence belongs to the NadD family.

It catalyses the reaction nicotinate beta-D-ribonucleotide + ATP + H(+) = deamido-NAD(+) + diphosphate. Its pathway is cofactor biosynthesis; NAD(+) biosynthesis; deamido-NAD(+) from nicotinate D-ribonucleotide: step 1/1. Functionally, catalyzes the reversible adenylation of nicotinate mononucleotide (NaMN) to nicotinic acid adenine dinucleotide (NaAD). This is Probable nicotinate-nucleotide adenylyltransferase from Desulfitobacterium hafniense (strain DSM 10664 / DCB-2).